Reading from the N-terminus, the 2988-residue chain is MVVSAGPWSSEKAEMNILEINETLRPQLAEKKQQFRNLKEKCFLTQLAGFLANQQKKYKYEECKDLIKFMLRNERQFKEEKLAEQLKQAEELRQYKVLVHSQERELTQLREKLREGRDASRSLYEHLQALLTPYEPDKSQGQDLQEQLAEGCRLAQHLVQKLSPENDEDEDEDVQVEEAEKVLESSAPREVQKAEESKVPEDSLEECAITCSNSHGPCDSNQPHKNIKITFEEDEVNSTLVVDRESSHDECQDALNILPVPGPTSSATNVSMVVSAGPLSSEKAEMNILEINEKLRPQLAEKKQQFRNLKEKCFLTQLSGFLANQQKKYKYEECKDLIKFMLRNERQFKEEKLAEQLKQAEELRQYKVLVHAQERELTQLREKLREGRDASRSLNEHLQALLTPDEPDKSQGQDLQEQLAEGCRLAQHLVQKLSPENDNDDDEDVQVEVAEKVQKSSAPREMQKAEEKEVPEDSLEECAITYSNSHGSYDSNQPHRKTKITFEEDKVDSTLIGSSSHVEWEDAVHIIPENESDDEEEEEKGPVSPRNLQESEEEEVPQESWDEGYSTLSIPPEMLASYQSYSSTFHSLEEQQVCMAVDIGRHRWDQVKKEDQEATGPRLSRELLDEKGPEVLQDSLDRCYSTPSGCLELTDSCQPYRSAFYVLEQQRVGLAVDMDEIEKYQEVEEDQDPSCPRLSRELLDEKEPEVLQDSLDRCYSTPSGYLELPDLGQPYSSAVYSLEEQYLGLALDVDRIKKDEEEEEDQDPPCPRLSRELLEVVEPEVLQDSLDRCYSTPSSCLEQPDSCQPYGSSFYALEEKHVGFSLDVGEIEKKGKGKKRRGRRSKKERRRGRKEGEEDQNPPCPRLSRELLDEKEPEVLQDSLDRCYSTPSGYLELPDLGQPYSSAVYSLEEQYLGLALDVDRIKKDEEEEEDQDPPCPRLSRELLEVVEPEVLQDSLDRCYSTPSSCLEQPDSCQPYGSSFYALEEKHVGFSLDVGEIEKKGKGKKRRGRRSKKERRRGRKEGEEDQNPPCPRLSRELLDEKGPEVLQDSLDRCYSTPSGCLELTDSCQPYRSAFYVLEQQRVGLAVDMDEIEKYQEVEEDQDPSCPRLSRELLDEKEPEVLQDSLDRCYSTPSGYLELPDLGQPYSSAVYSLEEQYLGLALDVDRIKKDEEEEEDQDPPCPRLSRELLEVVEPEVLQDSLDRCYSTPSSCLEQPDSCQPYGSSFYALEEKHVGFSLDVGEIEKKGKGKKRRGRRSKKERRRGRKEGEEDQNPPCPRLSRELLDEKGPEVLQDSLDRCYSTPSGCLELTDSCQPYRSAFYVLEQQRVGLAVDMDEIEKYQEVEEDQDPSCPRLSRELLDEKEPEVLQDSLDRCYSTPSGYLELPDLGQPYSSAVYSLEEQYLGLALDVDRIKKDEEEEEDQDPPCPRLSRELLEVVEPEVLQDSLDRCYSTPSSCLEQPDSCQPYGSSFYALEEKHVGFSLDVGEIEKKGKGKKRRGRRSKKERRRGRKEGEEDQNPPCPRLSRELLHEKGPEVLQDSLDRCYSTPSGCLELTDSCQPYRSAFYILEQQRVGLAVDMDEIEKYKEVEEDQDPSCPRLSRELLDEKEPEVLQDSLDRCYSTPSGYLELPDLGQPYSSAVYSLEEQYLGLALDVDRFKKDEEEEEDQDPPCPRLSRELLEVVEPEVLQDSLDRCYSTPSSCLEQPDSCQPYGSSFYALEEKHVGFSLDVGEIEKKGKGKKRRGRRSKKERRRGRKEGEEDQNPPCPRLSRELLDEKGPEVLQDSLDRCYSTPSGCLELTDSCQPYRSAFYVLEQQRVGLAVDMDEIEKYKEVEEDQDPSCPRLSRELLDEKEPEVLQDSLDRCYSTPSGYLELPDLGQPYSSAVYSLEEQYLGLALDVDRIKKDQEEEEDQGPPCPRLSRELLEVVEPEVLQDSLDRCYSTPSSCLEQPDSCQPYGSSFYALEEKHVGFSLDVGEIEKKGKGKKRRGRRSKKERRRGRKEGEEDQNPPCPRLSRELLDEKGPEVLQDSLDRCYSTPSGCLELTDSCQPYRSAFYVLEQQRVGLAVDMDEIEKYKEVEEDQDPSCPRLSRELLDEKEPEVLQDSLDRCYSTPSGYLELPDLGQPYSSAVYSLEEQYLGLALDVDRIKKDQEEEEDQGPPCPRLSRELLEVVEPEVLQDSLDRCYSTPSSCLEQPDSCQPYGSSFYALEEKHVGFSLDVGEIEKKGKGKKRRGRRSKKERRRGRKEGEEDQNPPCPRLSRELLDEKGPEVLQDSLDRCYSTPSGCLELTDSCQPYRSAFYVLEQQRVGLAVDMDEIEKYKEVEEDQDPSCPRLSRELLDEKEPEVLQDSLDRCYSTPSGYLELPDLGQPYSSAVYSLEEQYLGLALDVDRIKKDQEEEEDQGPPCPRLSRELLEVVEPEVLQDSLDRCYSTPSSCLEQPDSCQPYGSSFYALEEKHVGFSLDVGEIEKKGKGKKRRGRRSKKERRRGRKEGEEDQNPPCPRLSRELLDEKGPEVLQDSLDRCYSTPSGCLELTDSCQPYRSAFYVLEQQRVGLAVDMDEIEKYKEVEEDQDPSCPRLSRELLDEKEPEVLQDSLDRCYSTPSGYLELPDLGQPYSSAVYSLEEQYLGLALDVDRIKKDQEEEEDQGPPCPRLSRELLEVVEPEVLQDSLDRCYSTPSSCLEQPDSCQPYGSSFYALEEKHVGFSLDVGEIEKKGKGKKRRGRRSKKERRRGRKEGEEDQNPPCPRLSRELLDEKGPEVLQDSLDRCYSTPSGCLELTDSCQPYRSAFYVLEQQRVGLAVDMDEIEKYQEVEEDQDPSCPRLSRELLDEKDPEVLQDSLDRCYSTPSGYLELPDLGQPYSSAVYSLEEQYLGLALDVDKIEKKGKGKKRRGRRSKKERRRGRKEGEEDQNPPCPRLNGVLMEVEEREVLQDSLDRCYSTPSMYFELPDSFQHYRSVFYSFEEQHISFALYVDNRFFTLTVTSLHLVFQMGVIFPQ.

A coiled-coil region spans residues 75–119 (RQFKEEKLAEQLKQAEELRQYKVLVHSQERELTQLREKLREGRDA). Disordered regions lie at residues 161–200 (KLSP…SKVP), 451–474 (EKVQ…PEDS), and 520–566 (WEDA…EGYS). Residues 165-177 (ENDEDEDEDVQVE) are compositionally biased toward acidic residues. 32 Olduvai domains span residues 165-259 (ENDE…NILP), 436-528 (ENDN…HIIP), 529-600 (ENES…VDIG), 601-692 (RHRW…PSCP), 695-750 (SREL…LDVD), 751-843 (RIKK…RSKK), 844-919 (ERRR…LDVD), 920-1012 (RIKK…RSKK), 1013-1105 (ERRR…PSCP), 1108-1163 (SREL…LDVD), 1164-1256 (RIKK…RSKK), 1257-1349 (ERRR…PSCP), 1352-1407 (SREL…LDVD), 1408-1500 (RIKK…RSKK), 1501-1593 (ERRR…PSCP), 1596-1651 (SREL…LDVD), 1652-1744 (RFKK…RSKK), 1745-1837 (ERRR…PSCP), 1840-1895 (SREL…LDVD), 1896-1988 (RIKK…RSKK), 1989-2081 (ERRR…PSCP), 2084-2139 (SREL…LDVD), 2140-2232 (RIKK…RSKK), 2233-2325 (ERRR…PSCP), 2328-2383 (SREL…LDVD), 2384-2476 (RIKK…RSKK), 2477-2569 (ERRR…PSCP), 2572-2627 (SREL…LDVD), 2628-2720 (RIKK…RSKK), 2721-2813 (ERRR…PSCP), 2816-2889 (SREL…RSKK), and 2890-2988 (ERRR…IFPQ). Basic and acidic residues predominate over residues 190 to 200 (EVQKAEESKVP). Acidic residues-rich tracts occupy residues 530-539 (NESDDEEEEE) and 550-562 (ESEE…ESWD). Disordered stretches follow at residues 754–773 (KDEE…SREL), 828–871 (EKKG…LDEK), and 999–1038 (KGKG…ELLD). Basic residues-rich tracts occupy residues 831-849 (GKGK…RRGR) and 1000-1018 (GKGK…RRGR). The disordered stretch occupies residues 1243–1282 (KGKGKKRRGRRSKKERRRGRKEGEEDQNPPCPRLSRELLD). The span at 1244 to 1262 (GKGKKRRGRRSKKERRRGR) shows a compositional bias: basic residues. The interval 1487-1521 (KGKGKKRRGRRSKKERRRGRKEGEEDQNPPCPRLS) is disordered. The span at 1488–1506 (GKGKKRRGRRSKKERRRGR) shows a compositional bias: basic residues. The segment at 1731–1770 (KGKGKKRRGRRSKKERRRGRKEGEEDQNPPCPRLSRELLD) is disordered. The segment covering 1732–1750 (GKGKKRRGRRSKKERRRGR) has biased composition (basic residues). The disordered stretch occupies residues 1975–2014 (KGKGKKRRGRRSKKERRRGRKEGEEDQNPPCPRLSRELLD). Residues 1976–1994 (GKGKKRRGRRSKKERRRGR) show a composition bias toward basic residues. Residues 2219 to 2258 (KGKGKKRRGRRSKKERRRGRKEGEEDQNPPCPRLSRELLD) are disordered. The segment covering 2220 to 2238 (GKGKKRRGRRSKKERRRGR) has biased composition (basic residues). Residues 2463-2502 (KGKGKKRRGRRSKKERRRGRKEGEEDQNPPCPRLSRELLD) are disordered. A compositionally biased stretch (basic residues) spans 2464-2482 (GKGKKRRGRRSKKERRRGR). Disordered regions lie at residues 2707–2745 (KGKG…RELL) and 2877–2909 (GKGK…CPRL). 2 stretches are compositionally biased toward basic residues: residues 2708–2726 (GKGK…RRGR) and 2877–2895 (GKGK…RRGR).

The protein belongs to the NBPF family. As to expression, expressed in spleen and fetal liver.

Its subcellular location is the cytoplasm. The protein is NBPF family member NBPF14 of Homo sapiens (Human).